We begin with the raw amino-acid sequence, 120 residues long: NAD(P)H-quinone oxidoreductase subunit 3, chloroplastic (120 aa).

Transmembrane regions (helical) follow at residues 9 to 29 (IFWA…LISG), 64 to 84 (MFAL…PWAM), and 88 to 108 (VLGV…IVGL).

The protein belongs to the complex I subunit 3 family. In terms of assembly, NDH is composed of at least 16 different subunits, 5 of which are encoded in the nucleus.

Its subcellular location is the plastid. It is found in the chloroplast thylakoid membrane. The enzyme catalyses a plastoquinone + NADH + (n+1) H(+)(in) = a plastoquinol + NAD(+) + n H(+)(out). It carries out the reaction a plastoquinone + NADPH + (n+1) H(+)(in) = a plastoquinol + NADP(+) + n H(+)(out). NDH shuttles electrons from NAD(P)H:plastoquinone, via FMN and iron-sulfur (Fe-S) centers, to quinones in the photosynthetic chain and possibly in a chloroplast respiratory chain. The immediate electron acceptor for the enzyme in this species is believed to be plastoquinone. Couples the redox reaction to proton translocation, and thus conserves the redox energy in a proton gradient. This chain is NAD(P)H-quinone oxidoreductase subunit 3, chloroplastic, found in Populus alba (White poplar).